The chain runs to 512 residues: Cobyric acid synthase (512 aa).

A GATase cobBQ-type domain is found at 262 to 442 (WLRVAAIRLP…WHGLLETDRF (181 aa)). Cys-343 (nucleophile) is an active-site residue. The active site involves His-434.

It belongs to the CobB/CobQ family. CobQ subfamily.

Its pathway is cofactor biosynthesis; adenosylcobalamin biosynthesis. Functionally, catalyzes amidations at positions B, D, E, and G on adenosylcobyrinic A,C-diamide. NH(2) groups are provided by glutamine, and one molecule of ATP is hydrogenolyzed for each amidation. The chain is Cobyric acid synthase from Rhodococcus jostii (strain RHA1).